Reading from the N-terminus, the 568-residue chain is Phosphomethylpyrimidine synthase (568 aa).

Substrate contacts are provided by residues asparagine 188, methionine 217, tyrosine 246, histidine 282, 302–304 (SRG), 343–346 (DGLR), and glutamate 382. Histidine 386 is a Zn(2+) binding site. Tyrosine 409 provides a ligand contact to substrate. Zn(2+) is bound at residue histidine 450. Positions 530, 533, and 538 each coordinate [4Fe-4S] cluster.

This sequence belongs to the ThiC family. Homodimer. The cofactor is [4Fe-4S] cluster.

It catalyses the reaction 5-amino-1-(5-phospho-beta-D-ribosyl)imidazole + S-adenosyl-L-methionine = 4-amino-2-methyl-5-(phosphooxymethyl)pyrimidine + CO + 5'-deoxyadenosine + formate + L-methionine + 3 H(+). It functions in the pathway cofactor biosynthesis; thiamine diphosphate biosynthesis. Its function is as follows. Catalyzes the synthesis of the hydroxymethylpyrimidine phosphate (HMP-P) moiety of thiamine from aminoimidazole ribotide (AIR) in a radical S-adenosyl-L-methionine (SAM)-dependent reaction. The chain is Phosphomethylpyrimidine synthase from Idiomarina loihiensis (strain ATCC BAA-735 / DSM 15497 / L2-TR).